The sequence spans 75 residues: Defense protein 6 (75 aa).

The N-terminal stretch at 1–20 is a signal peptide; sequence MKTCLVFAFFLVAVFAAVQA. A propeptide spanning residues 21–32 is cleaved from the precursor; sequence EENDSPQTLPRR. Cystine bridges form between cysteine 44–cysteine 63, cysteine 49–cysteine 68, and cysteine 53–cysteine 70.

Belongs to the invertebrate defensin family.

The protein localises to the secreted. In terms of biological role, has antibacterial activity. This is Defense protein 6 from Lonomia obliqua (Moth).